Consider the following 864-residue polypeptide: Mitochondrial 15S rRNA processing factor CCM1 (864 aa).

Residues 1 to 76 (MYMARCGPKN…REFSNTLKER (76 aa)) constitute a mitochondrion transit peptide. PPR repeat units lie at residues 319–353 (NKQNLTTVIQFYSRKEMTKQAWNTFDTMKFLSTKH) and 356–390 (DICTYNTMLRICEKERNFPKALDLFQEIQDHNIKP).

The protein belongs to the CCM1 family. Binds to mitochondrial small subunit 15S rRNA.

The protein localises to the mitochondrion. Functionally, regulates mitochondrial small subunit maturation by controlling 15S rRNA 5'-end processing. Localizes to the 5' precursor of the 15S rRNA in a position that is subsequently occupied by mS47 in the mature yeast mtSSU. Uses structure and sequence-specific RNA recognition, binding to a single-stranded region of the precursor and specifically recognizing bases -6 to -1. The exchange of Ccm1 for mS47 is coupled to the irreversible removal of precursor rRNA that is accompanied by conformational changes of the mitoribosomal proteins uS5m and mS26. These conformational changes signal completion of 5'-end rRNA processing through protection of the mature 5'-end of the 15S rRNA and stabilization of mS47. The removal of the 5' precursor together with the dissociation of Ccm1 may be catalyzed by the 5'-3' exoribonuclease Pet127. Involved in the specific removal of group I introns in mitochondrial encoded transcripts. The chain is Mitochondrial 15S rRNA processing factor CCM1 (CCM1) from Saccharomyces cerevisiae (strain YJM789) (Baker's yeast).